Consider the following 499-residue polypeptide: Endosomal/lysosomal proton channel TMEM175 (499 aa).

At 1 to 30 (MSRLQTEEQAVDSEGDSSLHRRNEEGTQSS) the chain is on the cytoplasmic side. The interval 1–30 (MSRLQTEEQAVDSEGDSSLHRRNEEGTQSS) is disordered. Thr-6 carries the post-translational modification Phosphothreonine. A helical membrane pass occupies residues 31–53 (HRMLGFSDALLSIIATVMILPVT). Residues 32–38 (RMLGFSD) carry the RxxxFSD motif 1 motif. The Lumenal portion of the chain corresponds to 54–74 (HTEISPEQQFDKSIQKLLATR). A short helix H1-1 region spans residues 55–60 (TEISPE). The tract at residues 62 to 68 (QFDKSIQ) is short helix H2-1. Residues 75-97 (IAVYLMTFLIVTVAWTAHTRLFQ) form a helical membrane-spanning segment. Over 98–103 (VVGKID) the chain is Cytoplasmic. A helical membrane pass occupies residues 104 to 125 (DTLALLNLACMMTITLLPYTFS). The Lumenal segment spans residues 126-135 (LMVTFPDVPL). The helical transmembrane segment at 136–157 (GIFLFCVCVIAIGSVQAMIVGY) threads the bilayer. Residues 158 to 181 (AFHFPHLLNPQIQCSTHRDLSRRH) lie on the Cytoplasmic side of the membrane. Residues 182 to 202 (ILHLVLRGPALCFVAAVFSLF) form a helical membrane-spanning segment. Over 203-207 (FFPLS) the chain is Lumenal. The chain crosses the membrane as a helical span at residues 208–227 (YLLMVTVIFLPHISKATTWC). Residues 228–254 (KDKLMGQRESPAHDMEPFSIDLHAPLS) lie on the Cytoplasmic side of the membrane. The helical transmembrane segment at 255-279 (KERVEAFSDGVYAIVATLLILDICE) threads the bilayer. The short motif at 257-263 (RVEAFSD) is the RxxxFSD motif 2 element. Residues 280 to 306 (DNVPDPKDVQEKFSGSLVAALGAYGPQ) lie on the Lumenal side of the membrane. Positions 285–293 (PKDVQEKFS) are short helix H1-2. The interval 295–301 (SLVAALG) is short helix H2-2. Residues 307 to 329 (FLAYFGSFATVGLLWFAHHSLFL) form a helical membrane-spanning segment. The Cytoplasmic segment spans residues 330 to 335 (HVRKAT). The helical transmembrane segment at 336-357 (QTMGLLNILSLAFVGGLPLAYQ) threads the bilayer. Over 358 to 372 (QTSAFARQPHDELER) the chain is Lumenal. The helical transmembrane segment at 373 to 393 (VRVSCAIIFFASIFQFAIWTT) threads the bilayer. Topologically, residues 394–413 (ALLHQTETLQPAVQFGGQEH) are cytoplasmic. A helical membrane pass occupies residues 414–437 (AFMFAKLALYPCASLLAFAATCLL). Topologically, residues 438-439 (SR) are lumenal. Residues 440–466 (FSTAIFHLMQISVPFAFLLLRLLVRLA) traverse the membrane as a helical segment. Topologically, residues 467–499 (LAGLQVLRGLWPHHPQQDQSEPEAQSQLLPDPC) are cytoplasmic.

It belongs to the TMEM175 family. As to quaternary structure, homodimer. Interacts with AKT (AKT1, AKT2 or AKT3); leading to formation of the lysoK(GF) complex, which activates the channel. Interacts with LAMP1; inhibiting the proton channel activity of TMEM175. Interacts with LAMP2; inhibiting the proton channel activity of TMEM175.

It localises to the endosome membrane. It is found in the lysosome membrane. It catalyses the reaction H(+)(in) = H(+)(out). It carries out the reaction K(+)(in) = K(+)(out). Its activity is regulated as follows. Active at low pH (under pH 4.6): proton channel activity is activated by luminal side protons. Polyunsaturated fatty acids, such as arachidonic acid, also activate the channel activity. Proton channel activity is directly inhibited by LAMP1 or LAMP2, facilitating lysosomal acidification. Channel activity is activated following interaction with AKT (AKT1, AKT2 or AKT3): interaction promotes activation from closed to an open state. Activation by AKT is independent of AKT serine/threonine-protein kinase activity. Functionally, proton-activated proton channel that catalyzes proton efflux from endosomes and lysosomes to maintain a steady-state pH. Activated at low pH (under pH 4.6) by luminal side protons: selectively mediates lysosomal proton release from lysosomes, eliciting a proton leak that balances V-ATPase activity to maintain pH homeostasis. Regulation of lumenal pH stability is required for autophagosome-lysosome fusion. Also acts as a potassium channel at higher pH, regulating potassium conductance in endosomes and lysosomes. Constitutes the pore-forming subunit of the lysoK(GF) complex, a complex activated by extracellular growth factors. The lysoK(GF) complex is composed of TMEM175 and AKT (AKT1, AKT2 or AKT3), a major target of growth factor receptors: in the complex, TMEM175 channel is opened by conformational changes by AKT, leading to its activation. The lysoK(GF) complex is required to protect neurons against stress-induced damage. The chain is Endosomal/lysosomal proton channel TMEM175 from Mus musculus (Mouse).